A 109-amino-acid polypeptide reads, in one-letter code: RNA-binding protein Hfq (109 aa).

A Sm domain is found at aspartate 9–valine 68. Residues proline 77–glutamate 109 form a disordered region.

The protein belongs to the Hfq family. Homohexamer.

Its function is as follows. RNA chaperone that binds small regulatory RNA (sRNAs) and mRNAs to facilitate mRNA translational regulation in response to envelope stress, environmental stress and changes in metabolite concentrations. Also binds with high specificity to tRNAs. The polypeptide is RNA-binding protein Hfq (Francisella tularensis subsp. tularensis (strain FSC 198)).